Here is a 364-residue protein sequence, read N- to C-terminus: Caffeic acid 3-O-methyltransferase 2 (364 aa).

M129–L135 contacts substrate. The substrate binding stretch occupies residues A161–M179. Residues G207, D230, D250, M251, and K264 each contribute to the S-adenosyl-L-methionine site. H268 acts as the Proton acceptor in catalysis.

Belongs to the class I-like SAM-binding methyltransferase superfamily. Cation-independent O-methyltransferase family. COMT subfamily. As to quaternary structure, homodimer.

The catalysed reaction is (E)-caffeate + S-adenosyl-L-methionine = (E)-ferulate + S-adenosyl-L-homocysteine + H(+). It functions in the pathway aromatic compound metabolism; phenylpropanoid biosynthesis. Catalyzes the conversion of caffeic acid to ferulic acid and of 5-hydroxyferulic acid to sinapic acid. The resulting products may subsequently be converted to the corresponding alcohols that are incorporated into lignins. The chain is Caffeic acid 3-O-methyltransferase 2 (OMT2) from Populus tremuloides (Quaking aspen).